Consider the following 125-residue polypeptide: Small ribosomal subunit protein uS12 (125 aa).

Position 89 is a 3-methylthioaspartic acid (Asp89).

It belongs to the universal ribosomal protein uS12 family. As to quaternary structure, part of the 30S ribosomal subunit. Contacts proteins S8 and S17. May interact with IF1 in the 30S initiation complex.

With S4 and S5 plays an important role in translational accuracy. In terms of biological role, interacts with and stabilizes bases of the 16S rRNA that are involved in tRNA selection in the A site and with the mRNA backbone. Located at the interface of the 30S and 50S subunits, it traverses the body of the 30S subunit contacting proteins on the other side and probably holding the rRNA structure together. The combined cluster of proteins S8, S12 and S17 appears to hold together the shoulder and platform of the 30S subunit. The protein is Small ribosomal subunit protein uS12 of Ralstonia nicotianae (strain ATCC BAA-1114 / GMI1000) (Ralstonia solanacearum).